The sequence spans 381 residues: NF-kappa-B inhibitor-like protein 1 (381 aa).

Residues 1–34 (MSNPSPQAPEEEASTSVCRPQSCSMASASRRHRR) form a disordered region. Positions 14 to 27 (STSVCRPQSCSMAS) are enriched in polar residues. 2 ANK repeats span residues 64 to 93 (AGQP…ADPA) and 97 to 134 (RHGD…IKNK). 2 disordered regions span residues 132–167 (KNKD…REWR) and 186–298 (EDDA…WRFG). Ser-151 bears the Phosphoserine mark. Positions 151 to 160 (SAEEEEDEEV) are enriched in acidic residues. Composition is skewed to basic and acidic residues over residues 205–218 (RLAR…RQQL) and 237–290 (RQHE…RGAE).

Interacts with CACTIN (via N-terminal domain); the interaction occurs in a pro-inflammatory-independent manner. As to expression, high expression found in heart muscle, liver, kidney and skin. Not detected in spleen, lung and brain.

Its subcellular location is the nucleus. Functionally, involved in the regulation of innate immune response. Acts as negative regulator of Toll-like receptor and interferon-regulatory factor (IRF) signaling pathways. Contributes to the negative regulation of transcriptional activation of NF-kappa-B target genes in response to endogenous pro-inflammatory stimuli. This is NF-kappa-B inhibitor-like protein 1 (Nfkbil1) from Mus musculus (Mouse).